We begin with the raw amino-acid sequence, 234 residues long: 2-C-methyl-D-erythritol 4-phosphate cytidylyltransferase (234 aa).

It belongs to the IspD/TarI cytidylyltransferase family. IspD subfamily.

It carries out the reaction 2-C-methyl-D-erythritol 4-phosphate + CTP + H(+) = 4-CDP-2-C-methyl-D-erythritol + diphosphate. The protein operates within isoprenoid biosynthesis; isopentenyl diphosphate biosynthesis via DXP pathway; isopentenyl diphosphate from 1-deoxy-D-xylulose 5-phosphate: step 2/6. Catalyzes the formation of 4-diphosphocytidyl-2-C-methyl-D-erythritol from CTP and 2-C-methyl-D-erythritol 4-phosphate (MEP). This Photobacterium profundum (strain SS9) protein is 2-C-methyl-D-erythritol 4-phosphate cytidylyltransferase.